Here is a 314-residue protein sequence, read N- to C-terminus: ATP synthase gamma chain (314 aa).

The protein belongs to the ATPase gamma chain family. F-type ATPases have 2 components, CF(1) - the catalytic core - and CF(0) - the membrane proton channel. CF(1) has five subunits: alpha(3), beta(3), gamma(1), delta(1), epsilon(1). CF(0) has three main subunits: a, b and c.

The protein localises to the cellular thylakoid membrane. Its function is as follows. Produces ATP from ADP in the presence of a proton gradient across the membrane. The gamma chain is believed to be important in regulating ATPase activity and the flow of protons through the CF(0) complex. This chain is ATP synthase gamma chain, found in Synechococcus sp. (strain JA-2-3B'a(2-13)) (Cyanobacteria bacterium Yellowstone B-Prime).